The primary structure comprises 128 residues: Fluoride-specific ion channel FluC (128 aa).

4 consecutive transmembrane segments (helical) span residues 6–26, 36–56, 68–88, and 99–119; these read LVAL…GLVL, LPTF…AGLA, VLLF…GLET, and IAAA…WLGF. Residues G76 and T79 each contribute to the Na(+) site.

Belongs to the fluoride channel Fluc/FEX (TC 1.A.43) family.

The protein localises to the cell inner membrane. The enzyme catalyses fluoride(in) = fluoride(out). With respect to regulation, na(+) is not transported, but it plays an essential structural role and its presence is essential for fluoride channel function. Fluoride-specific ion channel. Important for reducing fluoride concentration in the cell, thus reducing its toxicity. The sequence is that of Fluoride-specific ion channel FluC from Methylobacillus flagellatus (strain ATCC 51484 / DSM 6875 / VKM B-1610 / KT).